We begin with the raw amino-acid sequence, 427 residues long: Light-independent protochlorophyllide reductase subunit N (427 aa).

[4Fe-4S] cluster is bound by residues cysteine 32, cysteine 57, and cysteine 118.

Belongs to the BchN/ChlN family. In terms of assembly, protochlorophyllide reductase is composed of three subunits; BchL, BchN and BchB. Forms a heterotetramer of two BchB and two BchN subunits. Requires [4Fe-4S] cluster as cofactor.

It carries out the reaction chlorophyllide a + oxidized 2[4Fe-4S]-[ferredoxin] + 2 ADP + 2 phosphate = protochlorophyllide a + reduced 2[4Fe-4S]-[ferredoxin] + 2 ATP + 2 H2O. Its pathway is porphyrin-containing compound metabolism; bacteriochlorophyll biosynthesis (light-independent). Its function is as follows. Component of the dark-operative protochlorophyllide reductase (DPOR) that uses Mg-ATP and reduced ferredoxin to reduce ring D of protochlorophyllide (Pchlide) to form chlorophyllide a (Chlide). This reaction is light-independent. The NB-protein (BchN-BchB) is the catalytic component of the complex. This is Light-independent protochlorophyllide reductase subunit N from Rubrivivax gelatinosus (strain NBRC 100245 / IL144).